Consider the following 293-residue polypeptide: ESX-3 secretion-associated protein EspG3 (293 aa).

The protein belongs to the EspG family.

It localises to the cytoplasm. This Mycolicibacterium smegmatis (strain ATCC 700084 / mc(2)155) (Mycobacterium smegmatis) protein is ESX-3 secretion-associated protein EspG3.